The following is a 499-amino-acid chain: Cytochrome P450 705A12 (499 aa).

The chain crosses the membrane as a helical span at residues 4–24 (LIIVDFQNISIFILLCLFSFL). Cys-439 provides a ligand contact to heme.

The protein belongs to the cytochrome P450 family. The cofactor is heme.

Its subcellular location is the membrane. May be involved in hydroxylation of the triterpene marneral. This is Cytochrome P450 705A12 from Arabidopsis thaliana (Mouse-ear cress).